A 728-amino-acid polypeptide reads, in one-letter code: Beta-galactosidase 12 (728 aa).

The signal sequence occupies residues 1-27 (MGLNFREKAWILLGILCCSSLICSVKA). E185 functions as the Proton donor in the catalytic mechanism. The Nucleophile role is filled by E254. N-linked (GlcNAc...) asparagine glycans are attached at residues N255, N380, and N450.

Belongs to the glycosyl hydrolase 35 family. In terms of tissue distribution, ubiquitous, with higher expression levels in roots and siliques.

The protein localises to the secreted. The protein resides in the extracellular space. Its subcellular location is the apoplast. It catalyses the reaction Hydrolysis of terminal non-reducing beta-D-galactose residues in beta-D-galactosides.. This chain is Beta-galactosidase 12 (BGAL12), found in Arabidopsis thaliana (Mouse-ear cress).